An 896-amino-acid chain; its full sequence is Serine/threonine-protein kinase TAO3 (896 aa).

Positions 24-277 (FVDLHEIGHG…SLELLRHDFV (254 aa)) constitute a Protein kinase domain. ATP-binding positions include 30-38 (IGHGSFGAV) and lysine 53. The active-site Proton acceptor is the aspartate 147. Disordered stretches follow at residues 316–366 (SRNG…SVNS) and 403–423 (DEADHRDPRPELRPTQSVQSQ). The segment covering 334–348 (GTSLTRKMDSLGSNH) has biased composition (polar residues). Low complexity predominate over residues 349-366 (SIPSTSVSTGSQSSSVNS). Over residues 403-414 (DEADHRDPRPEL) the composition is skewed to basic and acidic residues. Coiled-coil stretches lie at residues 450-513 (EQEN…SKRQ), 545-650 (SFLE…LIRQ), and 752-873 (LKSL…IETF). Basic and acidic residues predominate over residues 565-587 (LNEDHSTPKKEKQERISKHKENL). The segment at 565 to 593 (LNEDHSTPKKEKQERISKHKENLQHTQAE) is disordered.

It belongs to the protein kinase superfamily. STE Ser/Thr protein kinase family. STE20 subfamily.

It localises to the cytoplasm. The protein localises to the cell membrane. Its subcellular location is the membrane raft. It is found in the lipid droplet. It catalyses the reaction L-seryl-[protein] + ATP = O-phospho-L-seryl-[protein] + ADP + H(+). It carries out the reaction L-threonyl-[protein] + ATP = O-phospho-L-threonyl-[protein] + ADP + H(+). Functionally, serine/threonine-protein kinase that acts as a regulator of the p38/MAPK14 stress-activated MAPK cascade and of the MAPK8/JNK cascade. In response to DNA damage, involved in the G2/M transition DNA damage checkpoint by activating the p38/MAPK14 stress-activated MAPK cascade, probably by mediating phosphorylation of upstream MAP kinase kinases. Inhibits basal activity of the MAPK8/JNK cascade. The polypeptide is Serine/threonine-protein kinase TAO3 (taok3) (Xenopus laevis (African clawed frog)).